We begin with the raw amino-acid sequence, 1204 residues long: E3 ubiquitin-protein ligase DZIP3 (1204 aa).

Disordered stretches follow at residues 1–22 (MDSLAEEFFVSGNPDVEEQTKE) and 640–681 (SIPS…EQVS). Positions 649 to 658 (SVKDLQEVKS) are enriched in basic and acidic residues. Residues 659-668 (KTKKKKRTKS) are compositionally biased toward basic residues. Coiled coils occupy residues 746 to 861 (KETE…TSRA) and 906 to 941 (QLKAAVDSWNAIVADVRNKIAFLRTQYNEQINKVKQ). The span at 1088 to 1098 (PKKSESEEKSA) shows a compositional bias: basic and acidic residues. The disordered stretch occupies residues 1088–1141 (PKKSESEEKSAQDGNNASPSHTASQPNAPQDPKSAQGSATWEGDKDMDNEEEEE). Positions 1099–1126 (QDGNNASPSHTASQPNAPQDPKSAQGSA) are enriched in polar residues. Over residues 1132-1141 (KDMDNEEEEE) the composition is skewed to acidic residues. Residues 1144–1184 (CVICHENLSPENLSVLPCAHKFHSQCIRPWLMQQGTCPTCR) form an RING-type; atypical zinc finger.

In terms of assembly, probably interacts with DAZL.

Its subcellular location is the cytoplasm. The enzyme catalyses S-ubiquitinyl-[E2 ubiquitin-conjugating enzyme]-L-cysteine + [acceptor protein]-L-lysine = [E2 ubiquitin-conjugating enzyme]-L-cysteine + N(6)-ubiquitinyl-[acceptor protein]-L-lysine.. It participates in protein modification; protein ubiquitination. Functionally, E3 Ubiquitin ligase proteins mediate ubiquitination and subsequent proteasomal degradation of target proteins. E3 ubiquitin ligases accept ubiquitin from an E2 ubiquitin-conjugating enzyme in the form of a thioester and then directly transfers the ubiquitin to targeted substrates. Able to specifically bind RNA. In Mus musculus (Mouse), this protein is E3 ubiquitin-protein ligase DZIP3 (Dzip3).